The chain runs to 115 residues: Large ribosomal subunit protein bL20 (115 aa).

This sequence belongs to the bacterial ribosomal protein bL20 family.

Its function is as follows. Binds directly to 23S ribosomal RNA and is necessary for the in vitro assembly process of the 50S ribosomal subunit. It is not involved in the protein synthesizing functions of that subunit. This chain is Large ribosomal subunit protein bL20, found in Prochlorococcus marinus (strain MIT 9215).